The sequence spans 84 residues: Small ribosomal subunit protein bS16 (84 aa).

Belongs to the bacterial ribosomal protein bS16 family.

The protein is Small ribosomal subunit protein bS16 of Cupriavidus pinatubonensis (strain JMP 134 / LMG 1197) (Cupriavidus necator (strain JMP 134)).